The sequence spans 204 residues: CASP-like protein 1U3 (204 aa).

At 1–19 the chain is on the cytoplasmic side; the sequence is MCEGEKKKDSSSGALYCVN. The chain crosses the membrane as a helical span at residues 20-40; the sequence is LALRIVVLGLAVAAAALMATA. Over 41–63 the chain is Extracellular; the sequence is SQCTIFLYYGGPLHTITYKDFGP. A helical transmembrane segment spans residues 64 to 84; sequence FVYLVVASSIGAFMEAIAIFL. The Cytoplasmic segment spans residues 85–97; the sequence is TICKKKDGTPAKV. Residues 98-118 traverse the membrane as a helical segment; that stretch reads LLPLLDAAVPVLLYSATAAAF. Over 119 to 146 the chain is Extracellular; that stretch reads AAGDMSYCAVGKRVGVCTTAAAGNFCNQ. A helical transmembrane segment spans residues 147-167; it reads VHIAMYVSLAAGVALLVAEIV. The Cytoplasmic segment spans residues 168–204; that stretch reads KHWPDSGKKKEGGGGGCGSDSDSDKSTPCHHGCHSKH. Positions 173 to 204 are disordered; it reads SGKKKEGGGGGCGSDSDSDKSTPCHHGCHSKH.

This sequence belongs to the Casparian strip membrane proteins (CASP) family. As to quaternary structure, homodimer and heterodimers.

Its subcellular location is the cell membrane. The chain is CASP-like protein 1U3 from Oryza sativa subsp. japonica (Rice).